The chain runs to 201 residues: MSRYRGPRFKKIRRLGALPGLTSKRPRAGSDLRNQSRAGKKSQYRIRLEEKQKLRFHYGLTERQLLKYVRIAAKAKGSTGQVLLQLLEMRLDNILFRLGMASTIPRARQLVNHRHILVNGRIVDIPSYRCKPRDIITAKDEQKSRVMIQNSLDSFPQEELPKHLTLHPFQYKGLVNHIIDSKWIGLKINELLVVEYYSRQT.

The disordered stretch occupies residues 20–43; the sequence is GLTSKRPRAGSDLRNQSRAGKKSQ. Residues 89–150 enclose the S4 RNA-binding domain; that stretch reads MRLDNILFRL…EQKSRVMIQN (62 aa).

This sequence belongs to the universal ribosomal protein uS4 family. Part of the 30S ribosomal subunit. Contacts protein S5. The interaction surface between S4 and S5 is involved in control of translational fidelity.

Its subcellular location is the plastid. It localises to the chloroplast. Its function is as follows. One of the primary rRNA binding proteins, it binds directly to 16S rRNA where it nucleates assembly of the body of the 30S subunit. Functionally, with S5 and S12 plays an important role in translational accuracy. This chain is Small ribosomal subunit protein uS4c (rps4), found in Populus alba (White poplar).